We begin with the raw amino-acid sequence, 141 residues long: Nucleoside diphosphate kinase (141 aa).

ATP contacts are provided by Lys-11, Phe-59, Arg-87, Thr-93, Arg-104, and Asn-114. His-117 acts as the Pros-phosphohistidine intermediate in catalysis.

It belongs to the NDK family. As to quaternary structure, homotetramer. Requires Mg(2+) as cofactor.

The protein localises to the cytoplasm. It carries out the reaction a 2'-deoxyribonucleoside 5'-diphosphate + ATP = a 2'-deoxyribonucleoside 5'-triphosphate + ADP. The enzyme catalyses a ribonucleoside 5'-diphosphate + ATP = a ribonucleoside 5'-triphosphate + ADP. Its function is as follows. Major role in the synthesis of nucleoside triphosphates other than ATP. The ATP gamma phosphate is transferred to the NDP beta phosphate via a ping-pong mechanism, using a phosphorylated active-site intermediate. This Pseudomonas fluorescens (strain Pf0-1) protein is Nucleoside diphosphate kinase.